We begin with the raw amino-acid sequence, 298 residues long: Lipoyl synthase (298 aa).

Residues cysteine 40, cysteine 45, cysteine 51, cysteine 67, cysteine 71, cysteine 74, and serine 280 each contribute to the [4Fe-4S] cluster site. Positions 53–269 constitute a Radical SAM core domain; the sequence is AVRKTATFMI…KEIALSKGFS (217 aa).

Belongs to the radical SAM superfamily. Lipoyl synthase family. [4Fe-4S] cluster serves as cofactor.

It is found in the cytoplasm. It carries out the reaction [[Fe-S] cluster scaffold protein carrying a second [4Fe-4S](2+) cluster] + N(6)-octanoyl-L-lysyl-[protein] + 2 oxidized [2Fe-2S]-[ferredoxin] + 2 S-adenosyl-L-methionine + 4 H(+) = [[Fe-S] cluster scaffold protein] + N(6)-[(R)-dihydrolipoyl]-L-lysyl-[protein] + 4 Fe(3+) + 2 hydrogen sulfide + 2 5'-deoxyadenosine + 2 L-methionine + 2 reduced [2Fe-2S]-[ferredoxin]. Its pathway is protein modification; protein lipoylation via endogenous pathway; protein N(6)-(lipoyl)lysine from octanoyl-[acyl-carrier-protein]. Catalyzes the radical-mediated insertion of two sulfur atoms into the C-6 and C-8 positions of the octanoyl moiety bound to the lipoyl domains of lipoate-dependent enzymes, thereby converting the octanoylated domains into lipoylated derivatives. In Bacillus thuringiensis (strain Al Hakam), this protein is Lipoyl synthase.